The chain runs to 366 residues: Aminomethyltransferase (366 aa).

Belongs to the GcvT family. As to quaternary structure, the glycine cleavage system is composed of four proteins: P, T, L and H.

The enzyme catalyses N(6)-[(R)-S(8)-aminomethyldihydrolipoyl]-L-lysyl-[protein] + (6S)-5,6,7,8-tetrahydrofolate = N(6)-[(R)-dihydrolipoyl]-L-lysyl-[protein] + (6R)-5,10-methylene-5,6,7,8-tetrahydrofolate + NH4(+). In terms of biological role, the glycine cleavage system catalyzes the degradation of glycine. In Bacillus mycoides (strain KBAB4) (Bacillus weihenstephanensis), this protein is Aminomethyltransferase.